The sequence spans 385 residues: Heat-inducible transcription repressor HrcA (385 aa).

The protein belongs to the HrcA family.

Negative regulator of class I heat shock genes (grpE-dnaK-dnaJ and groELS operons). Prevents heat-shock induction of these operons. This is Heat-inducible transcription repressor HrcA from Protochlamydia amoebophila (strain UWE25).